Here is a 1486-residue protein sequence, read N- to C-terminus: Rap guanine nucleotide exchange factor 2 (1486 aa).

Disordered regions lie at residues 40–59 and 68–101; these read HVSS…SSSL and SEAG…SDPL. Residues 83 to 94 show a composition bias toward acidic residues; sequence VDSEDDDDEEDI. 135–252 is an a nucleoside 3',5'-cyclic phosphate binding site; the sequence is AFANMTMSVR…QKVEEEGEIV (118 aa). Positions 267–380 constitute an N-terminal Ras-GEF domain; sequence KGHIVIKGTS…RLLNIACAAK (114 aa). The 84-residue stretch at 385–468 folds into the PDZ domain; the sequence is LMTLTKPARE…LSITVKTNLF (84 aa). A Phosphoserine modification is found at Ser501. A Ras-associating domain is found at 606–692; it reads PDQVLRVFKA…GRYYLKNNME (87 aa). Thr644 carries the phosphothreonine modification. Residues 717 to 944 enclose the Ras-GEF domain; it reads STVEVATQLS…SQGSTNATVL (228 aa). Residues Ser806, Ser930, Ser933, and Ser1022 each carry the phosphoserine modification. Positions 1002 to 1049 are disordered; that stretch reads PATNTLPKNPTDKKPVKSETSPVAPRAGLQPKAQPQPQPPQPPHKLNQ. Over residues 1035 to 1044 the composition is skewed to pro residues; the sequence is QPQPQPPQPP. Residues Ser1077, Ser1086, Ser1092, Ser1113, Ser1117, Ser1156, and Ser1173 each carry the phosphoserine modification. Disordered regions lie at residues 1090–1176, 1221–1254, 1303–1357, and 1391–1486; these read EGSL…SVSI, PSTE…SGSH, KYSR…DSSS, and GRYR…VSAV. Low complexity-rich tracts occupy residues 1105-1122 and 1138-1159; these read SNTS…QSSP and SDSG…SFDS. Composition is skewed to polar residues over residues 1244 to 1254 and 1304 to 1328; these read GSWTSCSSGSH and YSRQ…SSTG. Acidic residues predominate over residues 1475–1486; that stretch reads AEEDEDEQVSAV.

The protein belongs to the RAPGEF2 family. Found in a complex, at least composed of KIDINS220, MAGI2, NTRK1 and RAPGEF2; the complex is mainly formed at late endosomes in a neuronal growth factor (NGF)-dependent manner. Interacts (via C-terminal domain) with NEDD4 (via WW domains); this interaction leads to ubiquitination and degradation via the proteasome pathway in a cAMP-independent manner. Interacts with MAGI1 (via PDZ domain). Interacts with ADRB1 (via C-terminal PDZ motif); the interaction is direct. Interacts (via Ras-associating domain) with RAP1A (via GTP-bound active form). Interacts weakly with HRAS (via GDP- and GTP-bound forms). Interacts (via C-terminal domain) with MAGI2 (via PDZ and WW domains). Interacts with CDH1 and TJP1. Interacts with CTNNB1. Ubiquitinated by NEDD4, leading to proteasomal degradation. Post-translationally, phosphorylation by PLK2 promotes its activity.

It localises to the cytoplasm. It is found in the perinuclear region. The protein localises to the cell membrane. Its subcellular location is the late endosome. The protein resides in the cell junction. In terms of biological role, functions as a guanine nucleotide exchange factor (GEF), which activates Rap and Ras family of small GTPases by exchanging bound GDP for free GTP in a cAMP-dependent manner. Serves as a link between cell surface receptors and Rap/Ras GTPases in intracellular signaling cascades. Also acts as an effector for Rap1 by direct association with Rap1-GTP thereby leading to the amplification of Rap1-mediated signaling. Shows weak activity on HRAS. It is controversial whether RAPGEF2 binds cAMP and cGMP or not. Its binding to ligand-activated beta-1 adrenergic receptor ADRB1 leads to the Ras activation through the G(s)-alpha signaling pathway. Involved in the cAMP-induced Ras and Erk1/2 signaling pathway that leads to sustained inhibition of long term melanogenesis by reducing dendrite extension and melanin synthesis. Also provides inhibitory signals for cell proliferation of melanoma cells and promotes their apoptosis in a cAMP-independent nanner. Regulates cAMP-induced neuritogenesis by mediating the Rap1/B-Raf/ERK signaling through a pathway that is independent on both PKA and RAPGEF3/RAPGEF4. Involved in neuron migration and in the formation of the major forebrain fiber connections forming the corpus callosum, the anterior commissure and the hippocampal commissure during brain development. Involved in neuronal growth factor (NGF)-induced sustained activation of Rap1 at late endosomes and in brain-derived neurotrophic factor (BDNF)-induced axon outgrowth of hippocampal neurons. Plays a role in the regulation of embryonic blood vessel formation and in the establishment of basal junction integrity and endothelial barrier function. May be involved in the regulation of the vascular endothelial growth factor receptor KDR and cadherin CDH5 expression at allantois endothelial cell-cell junctions. Binds to cAMP. The sequence is that of Rap guanine nucleotide exchange factor 2 (RAPGEF2) from Bos taurus (Bovine).